A 40-amino-acid chain; its full sequence is Alpha-1B-glycoprotein (40 aa).

N23 carries an N-linked (GlcNAc...) asparagine glycan.

As to quaternary structure, interacts with CRISP3. Plasma.

It is found in the secreted. This Sus scrofa (Pig) protein is Alpha-1B-glycoprotein (A1BG).